The sequence spans 685 residues: Delta-like protein 4 (685 aa).

The first 26 residues, 1–26, serve as a signal peptide directing secretion; that stretch reads MAAASRSASGWALLLLVALWQQRAAG. Residues 27-529 are Extracellular-facing; the sequence is SGVFQLQLQE…PVGLPPSFPW (503 aa). Cystine bridges form between Cys-50–Cys-54 and Cys-61–Cys-74. 2 N-linked (GlcNAc...) asparagine glycosylation sites follow: Asn-108 and Asn-183. In terms of domain architecture, DSL spans 173–217; that stretch reads VICSDNYYGDNCSRLCKKRNDHFGHYVCQPDGNLSCLPGWTGEYC. Cys-175 and Cys-184 form a disulfide bridge. Interaction with Notch1 regions lie at residues 185–187 and 191–195; these read SRL and RNDHF. Cys-188 and Cys-200 are disulfide-bonded. N-linked (GlcNAc...) asparagine glycosylation is present at Asn-205. Intrachain disulfides connect Cys-208/Cys-217, Cys-222/Cys-233, Cys-226/Cys-239, Cys-241/Cys-250, Cys-253/Cys-264, Cys-259/Cys-270, Cys-272/Cys-281, Cys-288/Cys-300, Cys-294/Cys-310, Cys-312/Cys-321, Cys-328/Cys-339, Cys-333/Cys-348, Cys-350/Cys-359, Cys-366/Cys-377, Cys-371/Cys-388, Cys-390/Cys-399, Cys-406/Cys-417, Cys-411/Cys-426, Cys-428/Cys-437, Cys-444/Cys-455, Cys-449/Cys-464, Cys-466/Cys-475, Cys-484/Cys-495, Cys-489/Cys-506, and Cys-508/Cys-517. EGF-like domains follow at residues 218–251, 252–282, 284–322, 324–360, 362–400, 402–438, 440–476, and 480–518; these read QQPI…RLCN, ECIP…LFCD, DLNY…VDCE, ELSE…LHCE, STLS…SNCE, KVDR…TYCE, HVSD…RRCE, and SIDA…SRCE. An N-linked (GlcNAc...) asparagine glycan is attached at Asn-393. Residues 530 to 550 form a helical membrane-spanning segment; it reads VAVSLGVGLAVLLVLLGMVAV. The Cytoplasmic portion of the chain corresponds to 551–685; that stretch reads AVRQLRLRRP…RNECVIATEV (135 aa).

Interacts with NOTCH4. Interacts (via N-terminal DSL and MNNL domains) with NOTCH1 (via EGF-like domains). In terms of tissue distribution, expressed in vascular endothelium.

It is found in the cell membrane. Involved in the Notch signaling pathway as Notch ligand. Activates NOTCH1 and NOTCH4. Involved in angiogenesis; negatively regulates endothelial cell proliferation and migration and angiogenic sprouting. Essential for retinal progenitor proliferation. Required for suppressing rod fates in late retinal progenitors as well as for proper generation of other retinal cell types. During spinal cord neurogenesis, inhibits V2a interneuron fate. The polypeptide is Delta-like protein 4 (DLL4) (Homo sapiens (Human)).